The primary structure comprises 195 residues: 7-methyl-GTP pyrophosphatase (195 aa).

D71 (proton acceptor) is an active-site residue.

The protein belongs to the Maf family. YceF subfamily. A divalent metal cation serves as cofactor.

It is found in the cytoplasm. The catalysed reaction is N(7)-methyl-GTP + H2O = N(7)-methyl-GMP + diphosphate + H(+). Nucleoside triphosphate pyrophosphatase that hydrolyzes 7-methyl-GTP (m(7)GTP). May have a dual role in cell division arrest and in preventing the incorporation of modified nucleotides into cellular nucleic acids. The protein is 7-methyl-GTP pyrophosphatase of Shewanella oneidensis (strain ATCC 700550 / JCM 31522 / CIP 106686 / LMG 19005 / NCIMB 14063 / MR-1).